The following is a 61-amino-acid chain: MSNSSNSTSLSNFSGIGVGVILTLVILFILILALLCLRVAACCTHVCTYCQLFKRWGQHPR.

The Lumenal portion of the chain corresponds to 1 to 14 (MSNSSNSTSLSNFS). N-linked (GlcNAc...) asparagine; by host glycosylation is found at Asn3, Asn6, and Asn12. A helical transmembrane segment spans residues 15-35 (GIGVGVILTLVILFILILALL). Residues 36–61 (CLRVAACCTHVCTYCQLFKRWGQHPR) are Cytoplasmic-facing.

It belongs to the adenoviridae E3-CR1 family. Interacts with E3 RID alpha and E3 RID beta. Only 1 of 3 three potential glycosylation sites is glycosylated. Oligosaccharides are not processed from high mannose to the complex type because the protein is retained in the endoplasmic reticulum.

It is found in the host endoplasmic reticulum membrane. The protein resides in the host cell membrane. Its function is as follows. Prevents infected cell apoptosis induced by the host immune system. May act by down-regulating host TRAIL receptors. May act in complex with E3 RID alpha and beta. May play a role on cellular apoptosis regulation in the ER. In Human adenovirus C serotype 2 (HAdV-2), this protein is Early 3 Conserved Region 1-alpha protein.